A 262-amino-acid chain; its full sequence is Taurine import ATP-binding protein TauB (262 aa).

The 231-residue stretch at V4–S234 folds into the ABC transporter domain. G39–S46 is an ATP binding site.

It belongs to the ABC transporter superfamily. Taurine importer (TC 3.A.1.17.1) family. In terms of assembly, the complex is composed of two ATP-binding proteins (TauB), two transmembrane proteins (TauC) and a solute-binding protein (TauA).

It is found in the cell inner membrane. The catalysed reaction is taurine(out) + ATP + H2O = taurine(in) + ADP + phosphate + H(+). Functionally, part of the ABC transporter complex TauABC involved in taurine import. Responsible for energy coupling to the transport system. The chain is Taurine import ATP-binding protein TauB from Rhizobium johnstonii (strain DSM 114642 / LMG 32736 / 3841) (Rhizobium leguminosarum bv. viciae).